We begin with the raw amino-acid sequence, 632 residues long: Probable potassium transport system protein Kup (632 aa).

A run of 12 helical transmembrane segments spans residues 20-40, 60-80, 111-131, 146-166, 178-198, 216-236, 257-277, 289-309, 347-367, 379-399, 404-424, and 429-449; these read LLVA…LYTL, ILSL…VMFI, LMVI…MITP, FDGI…ALFL, LFGP…VHGI, FFIV…LALT, WFAL…AILL, LLAP…ATVI, IYIA…VIGF, VAVT…MLLL, PVLA…FFAA, and IVQG…LMST.

The protein belongs to the HAK/KUP transporter (TC 2.A.72) family.

Its subcellular location is the cell inner membrane. It catalyses the reaction K(+)(in) + H(+)(in) = K(+)(out) + H(+)(out). In terms of biological role, transport of potassium into the cell. Likely operates as a K(+):H(+) symporter. The protein is Probable potassium transport system protein Kup of Pseudomonas putida (strain W619).